Here is a 97-residue protein sequence, read N- to C-terminus: Small ribosomal subunit protein eS25 (97 aa).

A disordered region spans residues 1 to 24 (MAPAASGAKKQKKKWSKGKVKDKA). Residues 9–18 (KKQKKKWSKG) show a composition bias toward basic residues.

Belongs to the eukaryotic ribosomal protein eS25 family. In terms of assembly, component of the small ribosomal subunit (SSU). Mature N.crassa ribosomes consist of a small (40S) and a large (60S) subunit. The 40S small subunit contains 1 molecule of ribosomal RNA (18S rRNA) and at least 32 different proteins. The large 60S subunit contains 3 rRNA molecules (26S, 5.8S and 5S rRNA) and at least 42 different proteins.

Its subcellular location is the cytoplasm. Functionally, component of the ribosome, a large ribonucleoprotein complex responsible for the synthesis of proteins in the cell. The small ribosomal subunit (SSU) binds messenger RNAs (mRNAs) and translates the encoded message by selecting cognate aminoacyl-transfer RNA (tRNA) molecules. The large subunit (LSU) contains the ribosomal catalytic site termed the peptidyl transferase center (PTC), which catalyzes the formation of peptide bonds, thereby polymerizing the amino acids delivered by tRNAs into a polypeptide chain. The nascent polypeptides leave the ribosome through a tunnel in the LSU and interact with protein factors that function in enzymatic processing, targeting, and the membrane insertion of nascent chains at the exit of the ribosomal tunnel. This is Small ribosomal subunit protein eS25 (rps-25) from Neurospora crassa (strain ATCC 24698 / 74-OR23-1A / CBS 708.71 / DSM 1257 / FGSC 987).